Consider the following 255-residue polypeptide: Glutamate racemase (255 aa).

Substrate-binding positions include 7 to 8 and 39 to 40; these read DS and YG. C70 (proton donor/acceptor) is an active-site residue. Residue 71–72 participates in substrate binding; that stretch reads NT. C181 serves as the catalytic Proton donor/acceptor. 182 to 183 serves as a coordination point for substrate; it reads TH.

The protein belongs to the aspartate/glutamate racemases family.

The enzyme catalyses L-glutamate = D-glutamate. The protein operates within cell wall biogenesis; peptidoglycan biosynthesis. Provides the (R)-glutamate required for cell wall biosynthesis. This is Glutamate racemase from Helicobacter acinonychis (strain Sheeba).